The following is a 390-amino-acid chain: Probable tRNA pseudouridine synthase D 2 (390 aa).

Catalysis depends on D93, which acts as the Nucleophile. The region spanning 166 to 353 (YVLNYYGIQR…YGTRRKMVTP (188 aa)) is the TRUD domain.

It belongs to the pseudouridine synthase TruD family.

The catalysed reaction is uridine(13) in tRNA = pseudouridine(13) in tRNA. Functionally, could be responsible for synthesis of pseudouridine from uracil-13 in transfer RNAs. The chain is Probable tRNA pseudouridine synthase D 2 from Methanococcus maripaludis (strain DSM 14266 / JCM 13030 / NBRC 101832 / S2 / LL).